Here is a 242-residue protein sequence, read N- to C-terminus: Outer membrane protein class 4 (242 aa).

Residues 1–22 (MTKQLKLSALFVALLASGTAVA) form the signal peptide. Repeat copies occupy residues 69 to 70 (AP), 71 to 72 (EP), 73 to 74 (EP), 75 to 76 (EP), 77 to 78 (EP), 79 to 80 (AP), and 81 to 82 (AP). Positions 69–82 (APEPEPEPEPAPAP) are 7 X 2 AA tandem repeats of X-P. The 138-residue stretch at 92-229 (YVDETISLSA…RVDVKIRSIV (138 aa)) folds into the OmpA-like domain. Cys-191 and Cys-214 are disulfide-bonded.

It belongs to the outer membrane OOP (TC 1.B.6) superfamily. As to quaternary structure, the C-terminus exists in a monomer-dimer equilibrium.

It localises to the cell outer membrane. This is Outer membrane protein class 4 from Neisseria meningitidis serogroup B (strain ATCC BAA-335 / MC58).